Consider the following 931-residue polypeptide: Netrin receptor UNC5C (931 aa).

An N-terminal signal peptide occupies residues 1–40 (MRKGLRATAARCGLGLGYLLQMLVLPALALLSASGTGSAA). The Extracellular segment spans residues 41–380 (QDDEFFHELP…APDSDDVALY (340 aa)). The Ig-like domain maps to 62-159 (PHFLIEPEEA…AGTTKSRKAY (98 aa)). Intrachain disulfides connect Cys83–Cys144, Cys95–Cys142, Cys188–Cys239, Cys272–Cys309, Cys276–Cys313, Cys287–Cys299, Cys328–Cys362, Cys332–Cys367, and Cys340–Cys352. Positions 161 to 256 (RIAYLRKTFE…KRKSTTATVI (96 aa)) constitute an Ig-like C2-type domain. Asn236 is a glycosylation site (N-linked (GlcNAc...) asparagine). TSP type-1 domains are found at residues 260-314 (NGGW…TLCP) and 316-368 (DGRW…GLCM). Asn361 carries N-linked (GlcNAc...) asparagine glycosylation. The helical transmembrane segment at 381 to 401 (VGIVIAVTVCLAITVVVALFV) threads the bilayer. Residues 402 to 931 (YRKNHRDFES…VVSLAAEGQY (530 aa)) are Cytoplasmic-facing. The interval 402–931 (YRKNHRDFES…VVSLAAEGQY (530 aa)) is required for netrin-mediated axon repulsion of neuronal growth cones. At Ser502 the chain carries Phosphoserine. The ZU5 domain occupies 530 to 673 (CTAFGTFNSL…LSTYALVGQS (144 aa)). At Tyr568 the chain carries Phosphotyrosine. The interval 694–712 (SLEYSIRVYCLDDTQDALK) is interaction with DCC. One can recognise a Death domain in the interval 850–929 (QKLCSSLDAP…ETVVSLAAEG (80 aa)).

Belongs to the unc-5 family. Interacts with DCC (via cytoplasmic domain). Interacts (tyrosine phosphorylated form) with PTPN11. Interacts (via extracellular domain) with FLRT3 (via extracellular domain). Interacts (via Ig-like C2-type domain) with DSCAM (via extracellular domain). Interacts (via death domain) with DAPK1. Interacts (via cytoplasmic domain) with TUBB3; this interaction is decreased by NTN1/Netrin-1. Phosphorylated on different cytoplasmic tyrosine residues. Phosphorylation of Tyr-568 leads to an interaction with PTPN11 phosphatase, suggesting that its activity is regulated by phosphorylation/dephosphorylation. Tyrosine phosphorylation is netrin-dependent. Post-translationally, proteolytically cleaved by caspases during apoptosis. The cleavage does not take place when the receptor is associated with netrin ligand. Its cleavage by caspases is required to induce apoptosis. As to expression, expressed in cortical and cerebellar neurons, including cells of the external and internal granular layer and of the Purkinje cell layer (at protein level). Mainly expressed in regions of differentiating neurons. Highly expressed in brain and lung. Expressed in the cerebellum and the neurons of the hippocampus, with enrichment in neurons of the CA3 hippocampal pyramidal layer. Weakly expressed in testis, ovary, spleen, thymus and bladder. Expressed at very low level in kidney, intestine and salivary gland.

It is found in the cell membrane. The protein localises to the cell surface. The protein resides in the synapse. Its subcellular location is the synaptosome. It localises to the cell projection. It is found in the dendrite. The protein localises to the axon. The protein resides in the growth cone. Its subcellular location is the lamellipodium. It localises to the filopodium. In terms of biological role, receptor for netrin required for axon guidance. Mediates axon repulsion of neuronal growth cones in the developing nervous system upon ligand binding. NTN1/Netrin-1 binding might cause dissociation of UNC5C from polymerized TUBB3 in microtubules and thereby lead to increased microtubule dynamics and axon repulsion. Axon repulsion in growth cones may also be caused by its association with DCC that may trigger signaling for repulsion. Might also collaborate with DSCAM in NTN1-mediated axon repulsion independently of DCC. Also involved in corticospinal tract axon guidance independently of DCC. Involved in dorsal root ganglion axon projection towards the spinal cord. It also acts as a dependence receptor required for apoptosis induction when not associated with netrin ligand. The polypeptide is Netrin receptor UNC5C (Unc5c) (Mus musculus (Mouse)).